The following is a 105-amino-acid chain: Thioredoxin (105 aa).

The Thioredoxin domain maps to 2–103; the sequence is VKQIESKSAF…KEKLEATIKG (102 aa). Lysine 3 is subject to N6-acetyllysine. At lysine 8 the chain carries N6-succinyllysine. Residues cysteine 32 and cysteine 35 each act as nucleophile in the active site. A disulfide bridge connects residues cysteine 32 and cysteine 35. Lysine 39 carries the post-translational modification N6-acetyllysine. S-nitrosocysteine is present on residues cysteine 62 and cysteine 69. S-nitrosocysteine; alternate is present on cysteine 73. Lysine 94 carries the N6-acetyllysine; alternate modification. Lysine 94 is subject to N6-succinyllysine; alternate.

Belongs to the thioredoxin family. In terms of assembly, homodimer; disulfide-linked. Interacts with TXNIP through the redox-active site. Interacts with MAP3K5 and CASP3. Interacts with APEX1; the interaction stimulates the FOS/JUN AP-1 DNA-binding activity in a redox-dependent manner. In the fully reduced protein, both Cys-69 and Cys-73 are nitrosylated in response to nitric oxide (NO). When two disulfide bonds are present in the protein, only Cys-73 is nitrosylated. Cys-73 can serve as donor for nitrosylation of target proteins.

The protein localises to the nucleus. It is found in the cytoplasm. Its subcellular location is the secreted. In terms of biological role, participates in various redox reactions through the reversible oxidation of its active center dithiol to a disulfide and catalyzes dithiol-disulfide exchange reactions. Plays a role in the reversible S-nitrosylation of cysteine residues in target proteins, and thereby contributes to the response to intracellular nitric oxide. Nitrosylates the active site Cys of CASP3 in response to nitric oxide (NO), and thereby inhibits caspase-3 activity. Induces the FOS/JUN AP-1 DNA binding activity in ionizing radiation (IR) cells through its oxidation/reduction status and stimulates AP-1 transcriptional activity. The protein is Thioredoxin (TXN) of Equus caballus (Horse).